The sequence spans 36 residues: Amanexitide proprotein 1 (36 aa).

Positions 1-10 (MSDINTARLP) are excised as a propeptide. A cross-link (cyclopeptide (Val-Pro)) is located at residues 11-19 (VFSLPVFFP). Residues 20–36 (FVSDDIQAVLTRGESLC) constitute a propeptide that is removed on maturation.

The protein belongs to the MSDIN fungal toxin family. Post-translationally, processed by the macrocyclase-peptidase enzyme POPB to yield a toxic cyclic nonapeptide. POPB first removes 10 residues from the N-terminus. Conformational trapping of the remaining peptide forces the enzyme to release this intermediate rather than proceed to macrocyclization. The enzyme rebinds the remaining peptide in a different conformation and catalyzes macrocyclization of the N-terminal 9 residues. As to expression, expressed in basidiocarps.

Functionally, cyclic nonapeptide that belongs to the MSDIN-like toxin family responsible for a large number of food poisoning cases and deaths. The sequence is that of Amanexitide proprotein 1 from Amanita exitialis (Guangzhou destroying angel).